A 428-amino-acid chain; its full sequence is Enolase (428 aa).

Gln-163 contributes to the (2R)-2-phosphoglycerate binding site. The active-site Proton donor is the Glu-205. 3 residues coordinate Mg(2+): Asp-242, Glu-285, and Asp-312. The (2R)-2-phosphoglycerate site is built by Lys-337, Arg-366, Ser-367, and Lys-388. The active-site Proton acceptor is Lys-337.

Belongs to the enolase family. It depends on Mg(2+) as a cofactor.

It localises to the cytoplasm. It is found in the secreted. The protein localises to the cell surface. It catalyses the reaction (2R)-2-phosphoglycerate = phosphoenolpyruvate + H2O. It functions in the pathway carbohydrate degradation; glycolysis; pyruvate from D-glyceraldehyde 3-phosphate: step 4/5. Functionally, catalyzes the reversible conversion of 2-phosphoglycerate (2-PG) into phosphoenolpyruvate (PEP). It is essential for the degradation of carbohydrates via glycolysis. In Neisseria gonorrhoeae (strain ATCC 700825 / FA 1090), this protein is Enolase.